The chain runs to 78 residues: Large ribosomal subunit protein bL28 (78 aa).

A disordered region spans residues 1–21 (MARVCQVTGKGPMTGNNVSHA).

Belongs to the bacterial ribosomal protein bL28 family.

The chain is Large ribosomal subunit protein bL28 from Bordetella petrii (strain ATCC BAA-461 / DSM 12804 / CCUG 43448).